A 173-amino-acid chain; its full sequence is Siroheme decarboxylase alpha subunit (173 aa).

Substrate contacts are provided by histidine 115 and arginine 119.

The protein belongs to the Ahb/Nir family. Forms a heterodimer composed of AhbA and AhbB.

It catalyses the reaction siroheme + 2 H(+) = 12,18-didecarboxysiroheme + 2 CO2. It functions in the pathway porphyrin-containing compound metabolism; protoheme biosynthesis. Its function is as follows. Involved in siroheme-dependent heme b biosynthesis. Catalyzes the decarboxylation of siroheme into didecarboxysiroheme. Siroheme is decarboxylated to monodecarboxysiroheme, which is in turn decarboxylated to didecarboxysiroheme. The sequence is that of Siroheme decarboxylase alpha subunit from Desulfovibrio desulfuricans (strain ATCC 27774 / DSM 6949 / MB).